Consider the following 214-residue polypeptide: Adenylate kinase (214 aa).

10-15 (GAGKGT) lines the ATP pocket. Positions 30-59 (STGDMLRAAVKAGTPLGLEAKKVMDAGQLV) are NMP. Residues T31, R36, 57 to 59 (QLV), 85 to 88 (GFPR), and Q92 contribute to the AMP site. Residues 122 to 159 (GRRVHPGSGRVYHVVFNPPKVEGKDDVTGEDLAIRPDD) form an LID region. Residues R123 and 132 to 133 (VY) contribute to the ATP site. 2 residues coordinate AMP: R156 and R167. ATP is bound at residue Q200.

This sequence belongs to the adenylate kinase family. Monomer.

Its subcellular location is the cytoplasm. It carries out the reaction AMP + ATP = 2 ADP. It functions in the pathway purine metabolism; AMP biosynthesis via salvage pathway; AMP from ADP: step 1/1. In terms of biological role, catalyzes the reversible transfer of the terminal phosphate group between ATP and AMP. Plays an important role in cellular energy homeostasis and in adenine nucleotide metabolism. In Shewanella oneidensis (strain ATCC 700550 / JCM 31522 / CIP 106686 / LMG 19005 / NCIMB 14063 / MR-1), this protein is Adenylate kinase.